The following is a 442-amino-acid chain: Glycolipid 2-alpha-mannosyltransferase (442 aa).

Topologically, residues 1–11 (MALFLSKRLLR) are cytoplasmic. The chain crosses the membrane as a helical; Signal-anchor for type II membrane protein span at residues 12–30 (FTVIAGAVIVLLLTLNSNS). The interval 31-118 (RTQQYIPSSI…YITPSFANKA (88 aa)) is stem region. At 31 to 442 (RTQQYIPSSI…KPKNWKKFRE (412 aa)) the chain is on the lumenal side. The segment at 68–95 (EQSALNSEASEDSEAMDEESKALKAAAE) is disordered. A compositionally biased stretch (basic and acidic residues) spans 85–95 (EESKALKAAAE). The interval 119–442 (GKPKACYVTL…KPKNWKKFRE (324 aa)) is catalytic. N-linked (GlcNAc...) asparagine glycosylation occurs at asparagine 197. Glutamate 329 (nucleophile) is an active-site residue.

Belongs to the glycosyltransferase 15 family. Mn(2+) serves as cofactor.

The protein localises to the golgi apparatus membrane. Its pathway is protein modification; protein glycosylation. Mannosyltransferase that transfers an alpha-D-mannosyl residue from GDP-mannose into lipid-linked oligosaccharide, forming an alpha-(1-&gt;2)-D-mannosyl-D-mannose linkage. Required for the attachment of the third mannose residue of O-linked saccharides. The sequence is that of Glycolipid 2-alpha-mannosyltransferase (KRE2) from Saccharomyces cerevisiae (strain ATCC 204508 / S288c) (Baker's yeast).